The following is a 344-amino-acid chain: Cell cycle control protein 50C (344 aa).

Residues 1-34 (MEETPQHCLSRLPDNSALKQQELPAHRLYFTARR) are Cytoplasmic-facing. Residues 35–55 (VLFVFFTTGIFCLCMGIILIL) traverse the membrane as a helical segment. The Extracellular segment spans residues 56–306 (SARSTQEIEI…STLTWCGGNS (251 aa)). N-linked (GlcNAc...) asparagine glycosylation is found at N66 and N261. Residues 307 to 327 (LFLGLAYTVTGAITWLASFTM) traverse the membrane as a helical segment. The Cytoplasmic portion of the chain corresponds to 328 to 344 (MAIHITLKNKQMSFFHQ).

Belongs to the CDC50/LEM3 family. In terms of tissue distribution, specifically expressed in testis.

The protein resides in the membrane. This chain is Cell cycle control protein 50C (TMEM30C), found in Macaca fascicularis (Crab-eating macaque).